The primary structure comprises 454 residues: UDP-N-acetylmuramoyl-tripeptide--D-alanyl-D-alanine ligase (454 aa).

Position 116 to 122 (116 to 122 (GSVGKTT)) interacts with ATP.

It belongs to the MurCDEF family. MurF subfamily.

It localises to the cytoplasm. The enzyme catalyses D-alanyl-D-alanine + UDP-N-acetyl-alpha-D-muramoyl-L-alanyl-gamma-D-glutamyl-meso-2,6-diaminopimelate + ATP = UDP-N-acetyl-alpha-D-muramoyl-L-alanyl-gamma-D-glutamyl-meso-2,6-diaminopimeloyl-D-alanyl-D-alanine + ADP + phosphate + H(+). It functions in the pathway cell wall biogenesis; peptidoglycan biosynthesis. Functionally, involved in cell wall formation. Catalyzes the final step in the synthesis of UDP-N-acetylmuramoyl-pentapeptide, the precursor of murein. The protein is UDP-N-acetylmuramoyl-tripeptide--D-alanyl-D-alanine ligase of Synechocystis sp. (strain ATCC 27184 / PCC 6803 / Kazusa).